Here is a 426-residue protein sequence, read N- to C-terminus: Glutamate-1-semialdehyde 2,1-aminomutase (426 aa).

Lys-265 carries the N6-(pyridoxal phosphate)lysine modification.

It belongs to the class-III pyridoxal-phosphate-dependent aminotransferase family. HemL subfamily. In terms of assembly, homodimer. The cofactor is pyridoxal 5'-phosphate.

The protein localises to the cytoplasm. The catalysed reaction is (S)-4-amino-5-oxopentanoate = 5-aminolevulinate. The protein operates within porphyrin-containing compound metabolism; protoporphyrin-IX biosynthesis; 5-aminolevulinate from L-glutamyl-tRNA(Glu): step 2/2. This is Glutamate-1-semialdehyde 2,1-aminomutase from Salmonella newport (strain SL254).